Reading from the N-terminus, the 98-residue chain is NADH-ubiquinone oxidoreductase chain 4L (98 aa).

Transmembrane regions (helical) follow at residues 1 to 21 (MPII…GMLI), 29 to 49 (SLLC…LMAL), and 58 to 78 (IVPV…LALL).

Belongs to the complex I subunit 4L family. In terms of assembly, core subunit of respiratory chain NADH dehydrogenase (Complex I) which is composed of 45 different subunits.

Its subcellular location is the mitochondrion inner membrane. It catalyses the reaction a ubiquinone + NADH + 5 H(+)(in) = a ubiquinol + NAD(+) + 4 H(+)(out). Its function is as follows. Core subunit of the mitochondrial membrane respiratory chain NADH dehydrogenase (Complex I) which catalyzes electron transfer from NADH through the respiratory chain, using ubiquinone as an electron acceptor. Part of the enzyme membrane arm which is embedded in the lipid bilayer and involved in proton translocation. The chain is NADH-ubiquinone oxidoreductase chain 4L (MT-ND4L) from Semnopithecus entellus (Northern plains gray langur).